A 1279-amino-acid polypeptide reads, in one-letter code: Talin-A (1279 aa).

The FERM domain occupies 84-365 (RPQKFKLLDG…GYIEIIMKAR (282 aa)).

It localises to the cytoplasm. The protein localises to the cytoskeleton. It is found in the cell cortex. Its function is as follows. Actin-binding protein that may be involved in the control of cell motility and chemotaxis. The chain is Talin-A (talA) from Dictyostelium discoideum (Social amoeba).